A 357-amino-acid chain; its full sequence is Protein RecA (357 aa).

67–74 contacts ATP; that stretch reads GPESSGKT. The interval 333–357 is disordered; it reads NELTPATAGNSHDEDAFADEGNEEF. Acidic residues predominate over residues 348–357; sequence AFADEGNEEF.

Belongs to the RecA family.

The protein resides in the cytoplasm. Functionally, can catalyze the hydrolysis of ATP in the presence of single-stranded DNA, the ATP-dependent uptake of single-stranded DNA by duplex DNA, and the ATP-dependent hybridization of homologous single-stranded DNAs. It interacts with LexA causing its activation and leading to its autocatalytic cleavage. The polypeptide is Protein RecA (Pectobacterium carotovorum subsp. carotovorum (strain PC1)).